The following is a 187-amino-acid chain: UPF0215 protein PAE0952 (187 aa).

The protein belongs to the UPF0215 family.

This Pyrobaculum aerophilum (strain ATCC 51768 / DSM 7523 / JCM 9630 / CIP 104966 / NBRC 100827 / IM2) protein is UPF0215 protein PAE0952.